A 204-amino-acid polypeptide reads, in one-letter code: Thymidylate kinase (204 aa).

ATP is bound at residue 11-18 (GLDKSGKT).

Belongs to the thymidylate kinase family.

The catalysed reaction is dTMP + ATP = dTDP + ADP. The protein operates within pyrimidine metabolism; dTTP biosynthesis. The sequence is that of Thymidylate kinase (TMK) from Ectromelia virus (strain Moscow) (ECTV).